We begin with the raw amino-acid sequence, 270 residues long: Interleukin-1 beta (270 aa).

The propeptide occupies 1-118; that stretch reads MATVPEPTSE…VYDDDAFVCD (118 aa).

It belongs to the IL-1 family. Monomer. In its precursor form, weakly interacts with full-length MEFV; the mature cytokine does not interact at all. Interacts with integrins ITGAV:ITGBV and ITGA5:ITGB1; integrin-binding is required for IL1B signaling. Interacts with cargo receptor TMED10; the interaction is direct and is required for the secretion of IL1B mature form. Interacts with HSP90AB1; the interaction facilitates cargo translocation into the ERGIC. Interacts with HSP90B1; the interaction facilitates cargo translocation into the ERGIC.

The protein resides in the cytoplasm. It is found in the cytosol. The protein localises to the secreted. Its subcellular location is the lysosome. It localises to the extracellular exosome. Potent pro-inflammatory cytokine. Initially discovered as the major endogenous pyrogen, induces prostaglandin synthesis, neutrophil influx and activation, T-cell activation and cytokine production, B-cell activation and antibody production, and fibroblast proliferation and collagen production. Promotes Th17 differentiation of T-cells. Synergizes with IL12/interleukin-12 to induce IFNG synthesis from T-helper 1 (Th1) cells. Plays a role in angiogenesis by inducing VEGF production synergistically with TNF and IL6. Involved in transduction of inflammation downstream of pyroptosis: its mature form is specifically released in the extracellular milieu by passing through the gasdermin-D (GSDMD) pore. In Phoca vitulina richardii (Pacific harbor seal), this protein is Interleukin-1 beta (IL1B).